The following is a 330-amino-acid chain: Aspartate--ammonia ligase (330 aa).

The protein belongs to the class-II aminoacyl-tRNA synthetase family. AsnA subfamily.

The protein localises to the cytoplasm. The catalysed reaction is L-aspartate + NH4(+) + ATP = L-asparagine + AMP + diphosphate + H(+). It participates in amino-acid biosynthesis; L-asparagine biosynthesis; L-asparagine from L-aspartate (ammonia route): step 1/1. The chain is Aspartate--ammonia ligase from Streptococcus pyogenes serotype M3 (strain ATCC BAA-595 / MGAS315).